A 240-amino-acid polypeptide reads, in one-letter code: Probable phosphatase Pcar_2586 (240 aa).

Residues His-12, His-14, His-20, His-45, Glu-78, His-105, His-136, Asp-197, and His-199 each coordinate Zn(2+).

It belongs to the PHP family. It depends on Zn(2+) as a cofactor.

The polypeptide is Probable phosphatase Pcar_2586 (Syntrophotalea carbinolica (strain DSM 2380 / NBRC 103641 / GraBd1) (Pelobacter carbinolicus)).